We begin with the raw amino-acid sequence, 317 residues long: Succinate receptor 1 (317 aa).

The Extracellular segment spans residues 1 to 27; it reads MAQNLSCENWLALENILKKYYLSAFYG. N-linked (GlcNAc...) asparagine glycosylation is present at N4. The helical transmembrane segment at 28–48 threads the bilayer; sequence IEFIVGMLGNFTVVFGYLFCM. The Cytoplasmic portion of the chain corresponds to 49-55; sequence KNWNSSN. Residues 56–76 form a helical membrane-spanning segment; sequence VYLFNLSISDLAFLCTLPMLI. Residues 77 to 99 lie on the Extracellular side of the membrane; it reads RSYATGNWTYGDVLCISNRYVLH. A disulfide bridge links C91 with C168. The helical transmembrane segment at 100-120 threads the bilayer; it reads ANLYTSILFLTFISIDRYLLM. At 121–133 the chain is on the cytoplasmic side; the sequence is KFPFREHILQKKE. Residues 134–154 form a helical membrane-spanning segment; the sequence is FAILISLAVWVLVTLEVLPML. The Extracellular segment spans residues 155 to 181; it reads TFITSTPIEKGDSCVDYASSGNPKYSL. Residues 182-202 form a helical membrane-spanning segment; it reads IYSLCLTLLGFLIPLSVMCFF. The Cytoplasmic segment spans residues 203-226; sequence YYKMVVFLKKRSQQQATVLSLNKP. The helical transmembrane segment at 227-247 threads the bilayer; sequence LRLVVLAVVIFSVLFTPYHIM. Over 248-276 the chain is Extracellular; that stretch reads RNVRIASRLDSWPQGCSQKAIKCLYILTR. Residues 277 to 297 traverse the membrane as a helical segment; sequence PLAFLNSAVNPIFYFLVGDHF. The Cytoplasmic segment spans residues 298–317; that stretch reads RDMLFSKLRQYFKSLTSFRL.

This sequence belongs to the G-protein coupled receptor 1 family. In terms of tissue distribution, expressed in retina.

The protein resides in the cell membrane. Functionally, g protein-coupled receptor for succinate able to mediate signaling through Gq/GNAQ or Gi/GNAI second messengers depending on the cell type and the processes regulated. Succinate-SUCNR1 signaling serves as a link between metabolic stress, inflammation and energy homeostasisn. In macrophages, plays a range of immune-regulatory roles. During inflammation, succinate-SUCNR1 signaling may act as an anti-inflammatory mediator or boost inflammation depending on the inflammatory status of cells. Hyperpolarizes M2 macrophages versus M1 phenotype through Gq signaling by regulating the transcription of genes involved in immune function. In activated M1 macrophages, plays a pro-inflammatory role in response to LPS. Expressed in dendritic cells, where it is involved in the sensing of immunological danger and enhances immunity. Mediates succinate triggered intracelleular calcium mobilization, induces migratory responses and acts in synergy with Toll-like receptor ligands for the production of proinflammatory cytokines as well as an enhancement of antigen-specific activation of helper T cells. In the small intestine, mediates the activation of tuft cells by dietary succinate and triggers type 2 immunity. In adipocytes, plays an important role in the control of energy metabolism. In response to succinate, controls leptin expression in an AMPK-JNK-CEBPA-dependent as well as circadian clock-regulated manner. In muscle tissue, is expressed in non-muscle cells and coordinates muscle remodeling in response to the succinate produced during exercise training in a paracrine manner. In retina, acts as a mediator of vessel growth during retinal development. In response to succinate, regulates the production of angiogenic factors, including VEGF, by retinal ganglion neurons. This is Succinate receptor 1 (Sucnr1) from Rattus norvegicus (Rat).